Consider the following 912-residue polypeptide: Coatomer subunit beta (912 aa).

HEAT repeat units follow at residues 59–96, 100–135, 136–172, 244–281, 300–337, 339–375, 397–434, 441–479, 550–575, and 576–612; these read PIPQLLMPIILYVMPSNDHTIKKLLLIYWEVIEKTHLG, SEMILVCNSLLNDLNHPNEFVRGSTLRFLCKLREAE, VLEPLVPSVRSNLENRHAYCRRNAVLAIYNIYSHFDY, SERSKYIKCIFTLLNSSSPAVKYESAGTLLSLSSAPTA, NVKMIVLDKLIEIKKNHSKIMEELVMDILRALSSPNID, CKKVLNIVLDSVTPKNIDEIILFLKKEINKTQSKEFD, EVLGNVVPLLMEYLGDSYLPSAVDVVIFLREVVETYPS, KKLIENLSSIKVSKVYRVAVWVIAEYVTCLEDLQYAMTS, LKAQVMMIISVLINLSKASQVSTSKS, and AYERMLSCIQVLIDSNATIKKIWLQDCRDSFANYLKY.

As to quaternary structure, oligomeric complex that consists of at least the alpha, beta, beta', gamma, delta, epsilon and zeta subunits.

It localises to the cytoplasm. The protein resides in the golgi apparatus membrane. It is found in the cytoplasmic vesicle. The protein localises to the COPI-coated vesicle membrane. Functionally, the coatomer is a cytosolic protein complex that binds to dilysine motifs and reversibly associates with Golgi non-clathrin-coated vesicles, which further mediate biosynthetic protein transport from the ER, via the Golgi up to the trans Golgi network. Coatomer complex is required for budding from Golgi membranes, and is essential for the retrograde Golgi-to-ER transport of dilysine-tagged proteins. The polypeptide is Coatomer subunit beta (copb) (Dictyostelium discoideum (Social amoeba)).